A 191-amino-acid chain; its full sequence is Potassium-transporting ATPase KdpC subunit (191 aa).

A helical transmembrane segment spans residues 6-26; it reads PAILLFILLTLVTGGLYPLLT.

Belongs to the KdpC family. In terms of assembly, the system is composed of three essential subunits: KdpA, KdpB and KdpC.

Its subcellular location is the cell inner membrane. Functionally, part of the high-affinity ATP-driven potassium transport (or Kdp) system, which catalyzes the hydrolysis of ATP coupled with the electrogenic transport of potassium into the cytoplasm. This subunit acts as a catalytic chaperone that increases the ATP-binding affinity of the ATP-hydrolyzing subunit KdpB by the formation of a transient KdpB/KdpC/ATP ternary complex. The sequence is that of Potassium-transporting ATPase KdpC subunit from Enterobacter sp. (strain 638).